A 394-amino-acid polypeptide reads, in one-letter code: MTKPQGIAVLGATGSVGCNTLDVVARHPERYRVVALTAHRQLDKLFEQARRFCPDYLVVADADAAARLRARLAEAGLRSEVLHGADALVQVAALPEVDAVMASIVGAAGLPSALAAARAGKRILLANKESLVVAGRLFMDAVRASGSALLPVDSEHSAIFQSLPADYAGNPDGAGVRKIILTASGGPFRNRPAADLAHVTPDEACRHPNWSMGRKISVDSATLMNKGLEVIEARWLFNVPPSRIEVAVHPQSVIHSMVQYRDGSVMAQLGSPDMRTPIACALAWPERIDAGVEPMDFFSLSDLTFEKPDLERFPCLQLAFDALEMGGDAPAVLNAANEVAVAAFLAGRLRFVDIPRVVAASLSGVSCAASDSLEGLLARDEEARRFAEGGVAAC.

7 residues coordinate NADPH: T13, G14, S15, V16, R40, Q41, and N127. K128 contacts 1-deoxy-D-xylulose 5-phosphate. Residue E129 participates in NADPH binding. D153 lines the Mn(2+) pocket. S154, E155, S184, and H207 together coordinate 1-deoxy-D-xylulose 5-phosphate. E155 provides a ligand contact to Mn(2+). G213 contacts NADPH. S220, N225, K226, and E229 together coordinate 1-deoxy-D-xylulose 5-phosphate. E229 provides a ligand contact to Mn(2+).

Belongs to the DXR family. The cofactor is Mg(2+). Mn(2+) is required as a cofactor.

It carries out the reaction 2-C-methyl-D-erythritol 4-phosphate + NADP(+) = 1-deoxy-D-xylulose 5-phosphate + NADPH + H(+). It functions in the pathway isoprenoid biosynthesis; isopentenyl diphosphate biosynthesis via DXP pathway; isopentenyl diphosphate from 1-deoxy-D-xylulose 5-phosphate: step 1/6. In terms of biological role, catalyzes the NADPH-dependent rearrangement and reduction of 1-deoxy-D-xylulose-5-phosphate (DXP) to 2-C-methyl-D-erythritol 4-phosphate (MEP). This is 1-deoxy-D-xylulose 5-phosphate reductoisomerase from Chromobacterium violaceum (strain ATCC 12472 / DSM 30191 / JCM 1249 / CCUG 213 / NBRC 12614 / NCIMB 9131 / NCTC 9757 / MK).